The primary structure comprises 155 residues: Ribosome maturation factor RimP (155 aa).

Belongs to the RimP family.

It localises to the cytoplasm. Its function is as follows. Required for maturation of 30S ribosomal subunits. The chain is Ribosome maturation factor RimP from Prochlorococcus marinus (strain MIT 9312).